An 88-amino-acid chain; its full sequence is Small ribosomal subunit protein bS20 (88 aa).

It belongs to the bacterial ribosomal protein bS20 family. As to quaternary structure, part of the 30S ribosomal subunit.

Functionally, binds directly to 16S ribosomal RNA. The protein is Small ribosomal subunit protein bS20 (rpsT) of Bacillus subtilis (strain 168).